A 460-amino-acid polypeptide reads, in one-letter code: Hydroxymethylglutaryl-CoA synthase MYCGRDRAFT_54740 (460 aa).

(3S)-3-hydroxy-3-methylglutaryl-CoA is bound at residue Ala35. Catalysis depends on Glu86, which acts as the Proton donor/acceptor. (3S)-3-hydroxy-3-methylglutaryl-CoA is bound by residues Cys120, Asn158, Thr162, Ser212, His262, Lys271, Asn339, and Ser373. The Acyl-thioester intermediate role is filled by Cys120. His262 functions as the Proton donor/acceptor in the catalytic mechanism.

The protein belongs to the thiolase-like superfamily. HMG-CoA synthase family.

It catalyses the reaction acetoacetyl-CoA + acetyl-CoA + H2O = (3S)-3-hydroxy-3-methylglutaryl-CoA + CoA + H(+). It participates in siderophore biosynthesis. In terms of biological role, hydroxymethylglutaryl-CoA synthase involved in the biosynthesis of a ferrichrome A-like siderophors which may contribute to organismal virulence. The first step of siderophore biosynthesis is performed by the HMG-CoA synthase (HMGS) MYCGRDRAFT_54740 which catalyzes the generation of HMG-CoA and CoA using acetoacetyl-CoA and acetyl-CoA as substrates. The enoyl-CoA isomerase/hydratase MYCGRDRAFT_76805 then catalyzes the conversion of HMG-CoA to methylglutaconyl-CoA. The acyltransferase MYCGRDRAFT_85486 then fuses methylglutaconyl-CoA with hydroxyornithine to yield methylglutaconyl hydroxyornithine. Methylglutaconyl hydroxyornithine is then available for use by the nonribosomal peptide synthetase NRPS2 to generate the ferrichrome A-like siderophore. The sequence is that of Hydroxymethylglutaryl-CoA synthase MYCGRDRAFT_54740 (ERG13) from Zymoseptoria tritici (strain CBS 115943 / IPO323) (Speckled leaf blotch fungus).